We begin with the raw amino-acid sequence, 607 residues long: UvrABC system protein C (607 aa).

The GIY-YIG domain maps to His-14–Ile-93. The UVR domain occupies Arg-203–Thr-238.

This sequence belongs to the UvrC family. In terms of assembly, interacts with UvrB in an incision complex.

It is found in the cytoplasm. In terms of biological role, the UvrABC repair system catalyzes the recognition and processing of DNA lesions. UvrC both incises the 5' and 3' sides of the lesion. The N-terminal half is responsible for the 3' incision and the C-terminal half is responsible for the 5' incision. This is UvrABC system protein C from Desulfotalea psychrophila (strain LSv54 / DSM 12343).